A 231-amino-acid chain; its full sequence is Acyl-protein thioesterase 2 (231 aa).

C2 carries S-palmitoyl cysteine lipidation. Residue S82 is modified to Phosphoserine. Residues S122, D176, and H210 each act as charge relay system in the active site.

It belongs to the AB hydrolase superfamily. AB hydrolase 2 family. Ubiquitous; detected at low levels.

The protein resides in the cytoplasm. It catalyses the reaction S-hexadecanoyl-L-cysteinyl-[protein] + H2O = L-cysteinyl-[protein] + hexadecanoate + H(+). It carries out the reaction prostaglandin E2 1-glyceryl ester + H2O = prostaglandin E2 + glycerol + H(+). The enzyme catalyses 1-hexadecanoyl-sn-glycero-3-phosphocholine + H2O = sn-glycerol 3-phosphocholine + hexadecanoate + H(+). The catalysed reaction is 1-octadecanoyl-sn-glycero-3-phosphocholine + H2O = octadecanoate + sn-glycerol 3-phosphocholine + H(+). It catalyses the reaction 1-hexadecanoyl-sn-glycero-3-phosphate + H2O = sn-glycerol 3-phosphate + hexadecanoate + H(+). It carries out the reaction 1-hexadecanoyl-sn-glycero-3-phospho-L-serine + H2O = sn-glycero-3-phospho-L-serine + hexadecanoate + H(+). Its function is as follows. Acts as an acyl-protein thioesterase hydrolyzing fatty acids from S-acylated cysteine residues in proteins such as trimeric G alpha proteins, GSDMD, GAP43, ZDHHC6 or HRAS. Deacylates GAP43. Mediates depalmitoylation of ZDHHC6. Has lysophospholipase activity. Hydrolyzes prostaglandin glycerol esters (PG-Gs). Hydrolyzes PG-Gs in the following order prostaglandin D2-glycerol ester (PGD2-G) &gt; prostaglandin E2 glycerol ester (PGE2-G) &gt; prostaglandin F2-alpha-glycerol ester (PGF2-alpha-G). Hydrolyzes 1-arachidonoylglycerol but not 2-arachidonoylglycerol or arachidonoylethanolamide. This is Acyl-protein thioesterase 2 (Lypla2) from Mus musculus (Mouse).